A 225-amino-acid polypeptide reads, in one-letter code: Viral late gene transcription factor 3 (225 aa).

A zinc finger lies at 7-27 (CSNCKHNGLITESNHEFCIFC).

It belongs to the nucleo-cytoplasmic large DNA viruses (NCLDVs) VLTF-3 family. Interacts with the late transcription elongation factor H5/VLTF-4. Interacts with the late transcription factors VLTF-1.

Acts with RNA polymerase to initiate transcription from late gene promoters. The sequence is that of Viral late gene transcription factor 3 (VLTF3) from Fowlpox virus (strain NVSL) (FPV).